Here is a 215-residue protein sequence, read N- to C-terminus: 5'-deoxynucleotidase YGK1 (215 aa).

The HD domain occupies 58 to 164; that stretch reads ISDHMYRMGL…VKDIDKYEML (107 aa). Residues His-61, His-89, Asp-90, Glu-93, Asp-98, Ile-99, and Asp-159 each contribute to the a divalent metal cation site.

Belongs to the HDDC2 family. As to quaternary structure, homodimer. The cofactor is Mn(2+). Co(2+) is required as a cofactor. It depends on Mg(2+) as a cofactor.

The catalysed reaction is a 2'-deoxyribonucleoside 5'-phosphate + H2O = a 2'-deoxyribonucleoside + phosphate. Catalyzes the dephosphorylation of the nucleoside 5'-monophosphates deoxyadenosine monophosphate (dAMP), deoxycytidine monophosphate (dCMP), deoxyguanosine monophosphate (dGMP) and deoxythymidine monophosphate (dTMP). The protein is 5'-deoxynucleotidase YGK1 of Saccharomyces cerevisiae (strain ATCC 204508 / S288c) (Baker's yeast).